The following is a 188-amino-acid chain: Tumor necrosis factor alpha-induced protein 8-like protein (188 aa).

It belongs to the TNFAIP8 family.

The protein is Tumor necrosis factor alpha-induced protein 8-like protein of Drosophila pseudoobscura pseudoobscura (Fruit fly).